The primary structure comprises 121 residues: Large ribosomal subunit protein uL18 (121 aa).

It belongs to the universal ribosomal protein uL18 family. Part of the 50S ribosomal subunit; part of the 5S rRNA/L5/L18/L25 subcomplex. Contacts the 5S and 23S rRNAs.

Its function is as follows. This is one of the proteins that bind and probably mediate the attachment of the 5S RNA into the large ribosomal subunit, where it forms part of the central protuberance. The polypeptide is Large ribosomal subunit protein uL18 (Polaromonas naphthalenivorans (strain CJ2)).